Reading from the N-terminus, the 1179-residue chain is Integrin alpha-1 (1179 aa).

A signal peptide spans 1–28 (MVPRRPASLEVTVACIWLLTVILGVCIS). The Extracellular segment spans residues 29–1141 (FNVDVKNSMS…SKDGLPGRVP (1113 aa)). Residues 30–91 (NVDVKNSMSF…CPVGRERSMP (62 aa)) form an FG-GAP 1 repeat. Residues Cys-82 and Cys-92 are joined by a disulfide bond. Asn-100, Asn-105, Asn-112, Asn-217, Asn-317, Asn-341, Asn-402, Asn-418, and Asn-459 each carry an N-linked (GlcNAc...) asparagine glycan. An FG-GAP 2 repeat occupies 101–160 (TSIPNVTEIKENMTFGSTLVTNPKGGFLACGPLYAYRCGHLHYTTGICSDVSPTFQVVNS). Positions 175 to 364 (IVLDGSNSIY…LGERIFALEA (190 aa)) constitute a VWFA domain. The stretch at 365 to 417 (TADQSAASFEMEMSQTGFSAHYSQDWVMLGAVGAYDWNGTVVMQKANQIVIPH) is one FG-GAP 3 repeat. 4 FG-GAP repeats span residues 422–474 (QTEP…DGDV), 475–537 (NILQ…RFEY), 556–614 (SCTK…TIRK), and 618–678 (QRIP…FEPN). Ca(2+) is bound by residues Asp-497, Asp-499, Asp-501, and Asp-505. Asn-531 carries an N-linked (GlcNAc...) asparagine glycan. Asp-579, Asn-581, Asp-583, Asp-587, Asp-641, Asn-643, Asp-645, and Asp-649 together coordinate Ca(2+). Cys-687 and Cys-696 are oxidised to a cystine. Residues Asn-698, Asn-747, and Asn-779 are each glycosylated (N-linked (GlcNAc...) asparagine). Cys-702 and Cys-755 are disulfide-bonded. An intrachain disulfide couples Cys-807 to Cys-813. Asn-839, Asn-882, Asn-907, Asn-938, Asn-965, Asn-973, and Asn-1007 each carry an N-linked (GlcNAc...) asparagine glycan. Cys-877 and Cys-885 form a disulfide bridge. 2 disulfide bridges follow: Cys-1029-Cys-1062 and Cys-1065-Cys-1072. Residues Asn-1083, Asn-1102, and Asn-1113 are each glycosylated (N-linked (GlcNAc...) asparagine). The chain crosses the membrane as a helical span at residues 1142–1164 (LWVILLSAFAGLLLLMLLILALW). At 1165–1179 (KIGFFKRPLKKKMEK) the chain is on the cytoplasmic side. The GFFKR motif signature appears at 1167 to 1171 (GFFKR).

It belongs to the integrin alpha chain family. As to quaternary structure, heterodimer of an alpha and a beta subunit. Alpha-1 associates with beta-1. Interacts with RAB21. Interacts (via cytoplasmic domain) with PTPN2; activates PTPN2 phosphatase activity towards EGFR and negatively regulates EGF signaling.

Its subcellular location is the membrane. Functionally, integrin alpha-1/beta-1 is a receptor for laminin and collagen. It recognizes the proline-hydroxylated sequence G-F-P-G-E-R in collagen. Involved in anchorage-dependent, negative regulation of EGF-stimulated cell growth. This chain is Integrin alpha-1 (Itga1), found in Mus musculus (Mouse).